Reading from the N-terminus, the 450-residue chain is Probable ECA polymerase (450 aa).

Transmembrane regions (helical) follow at residues 6–26 (FSGL…LTWF), 37–57 (VFFS…TSVL), 63–83 (VGVA…CFYA), 118–138 (VILM…NGFL), 155–175 (GVAL…VYFL), 181–201 (AWLF…MIVG), 207–227 (IIIA…ISLW), 228–248 (MLAA…LKRY), 341–361 (LVVM…GLII), 378–398 (YKAA…IVLA), and 410–430 (VFFI…YWLF).

It belongs to the WzyE family. As to quaternary structure, probably part of a complex composed of WzxE, WzyE and WzzE.

The protein localises to the cell inner membrane. Its pathway is bacterial outer membrane biogenesis; enterobacterial common antigen biosynthesis. Probably involved in the polymerization of enterobacterial common antigen (ECA) trisaccharide repeat units. The chain is Probable ECA polymerase from Escherichia fergusonii (strain ATCC 35469 / DSM 13698 / CCUG 18766 / IAM 14443 / JCM 21226 / LMG 7866 / NBRC 102419 / NCTC 12128 / CDC 0568-73).